Here is a 125-residue protein sequence, read N- to C-terminus: UPF0102 protein ABO_0585 (125 aa).

It belongs to the UPF0102 family.

This is UPF0102 protein ABO_0585 from Alcanivorax borkumensis (strain ATCC 700651 / DSM 11573 / NCIMB 13689 / SK2).